The following is a 505-amino-acid chain: MAKKPTALIILDGFANRESEHGNAVKLANKPNFDRYYNKYPTTQIEASGLDVGLPEGQMGNSEVGHMNIGAGRIVYQSLTRINKSIEDGDFFENDVLNNAIAHVNSHDSALHIFGLLSDGGVHSHYKHLFALLELAKKQGVEKVYVHAFLDGRDVDQKSALKYIEETEAKFNELGIGQFASVSGRYYAMDRDKRWEREEKAYNAIRNFDAPTYATAKEGVEASYNEGLTDEFVVPFIVENQNDGVNDGDAVIFYNFRPDRAAQLSEIFANRAFEGFKVEQVKDLFYATFTKYNDNIDAAIVFEKVDLNNTIGEIAQNNNLTQLRIAETEKYPHVTYFMSGGRNEEFKGERRRLIDSPKVATYDLKPEMSAYEVKDALLEELNKGDLDLIILNFANPDMVGHSGMLEPTIKAIEAVDECLGEVVDKILDMDGYAIITADHGNSDQVLTDDDQPMTTHTTNPVPVIVTKEGVTLRETGRLGDLAPTLLDLLNVEQPEDMTGESLIKH.

The Mn(2+) site is built by Asp-12 and Ser-62. Ser-62 (phosphoserine intermediate) is an active-site residue. Substrate-binding positions include His-123, 153-154 (RD), Arg-185, Arg-191, 257-260 (RPDR), and Lys-330. Mn(2+)-binding residues include Asp-397, His-401, Asp-438, His-439, and His-456.

This sequence belongs to the BPG-independent phosphoglycerate mutase family. In terms of assembly, monomer. It depends on Mn(2+) as a cofactor.

It catalyses the reaction (2R)-2-phosphoglycerate = (2R)-3-phosphoglycerate. Its pathway is carbohydrate degradation; glycolysis; pyruvate from D-glyceraldehyde 3-phosphate: step 3/5. Functionally, catalyzes the interconversion of 2-phosphoglycerate and 3-phosphoglycerate. In Staphylococcus aureus (strain COL), this protein is 2,3-bisphosphoglycerate-independent phosphoglycerate mutase.